The following is a 101-amino-acid chain: Large ribosomal subunit protein uL24 (101 aa).

The protein belongs to the universal ribosomal protein uL24 family. In terms of assembly, part of the 50S ribosomal subunit.

Its function is as follows. One of two assembly initiator proteins, it binds directly to the 5'-end of the 23S rRNA, where it nucleates assembly of the 50S subunit. One of the proteins that surrounds the polypeptide exit tunnel on the outside of the subunit. In Streptococcus gordonii (strain Challis / ATCC 35105 / BCRC 15272 / CH1 / DL1 / V288), this protein is Large ribosomal subunit protein uL24.